Here is a 241-residue protein sequence, read N- to C-terminus: Probable transcriptional regulator PhnF (241 aa).

Residues 11–78 (PTRYQEIAAK…QGVGVLVLMR (68 aa)) enclose the HTH gntR-type domain. Positions 38–57 (EQQLAARFEVNRHTLRRAID) form a DNA-binding region, H-T-H motif.

In terms of biological role, belongs to an operon involved in alkylphosphonate uptake and C-P lyase. Exact function not known. By similarity could be a transcriptional regulator. The polypeptide is Probable transcriptional regulator PhnF (phnF) (Escherichia coli (strain K12)).